The primary structure comprises 311 residues: ATP synthase subunit gamma, mitochondrial (311 aa).

The N-terminal 33 residues, Met1–Tyr33, are a transit peptide targeting the mitochondrion.

It belongs to the ATPase gamma chain family. In terms of assembly, F-type ATPases have 2 components, CF(1) - the catalytic core - and CF(0) - the membrane proton channel. CF(1) has five subunits: alpha(3), beta(3), gamma(1), delta(1), epsilon(1). CF(0) has three main subunits: a, b and c.

It is found in the mitochondrion. The protein localises to the mitochondrion inner membrane. Its function is as follows. Mitochondrial membrane ATP synthase (F(1)F(0) ATP synthase or Complex V) produces ATP from ADP in the presence of a proton gradient across the membrane which is generated by electron transport complexes of the respiratory chain. F-type ATPases consist of two structural domains, F(1) - containing the extramembraneous catalytic core, and F(0) - containing the membrane proton channel, linked together by a central stalk and a peripheral stalk. During catalysis, ATP synthesis in the catalytic domain of F(1) is coupled via a rotary mechanism of the central stalk subunits to proton translocation. Part of the complex F(1) domain and the central stalk which is part of the complex rotary element. The gamma subunit protrudes into the catalytic domain formed of alpha(3)beta(3). Rotation of the central stalk against the surrounding alpha(3)beta(3) subunits leads to hydrolysis of ATP in three separate catalytic sites on the beta subunits. This Saccharomyces cerevisiae (strain ATCC 204508 / S288c) (Baker's yeast) protein is ATP synthase subunit gamma, mitochondrial (ATP3).